The chain runs to 698 residues: Protein artemis (698 aa).

Thr380 is subject to Phosphothreonine. Ser385 is subject to Phosphoserine. 3 disordered regions span residues 445–485 (ANFV…DPDV), 505–595 (LENL…DSIS), and 620–669 (NGVP…LPKP). Residues 449-461 (DCDESNSDSEGEL) show a composition bias toward acidic residues. A compositionally biased stretch (polar residues) spans 508–521 (LPSSIETGGSQSPK). Positions 538–551 (THISSQNSSQSTHI) are enriched in low complexity. The segment covering 552–583 (TDQGSQGWDSQCDTVLLSSQEKSGGDSTSLNK) has biased composition (polar residues). Low complexity predominate over residues 641-655 (TSLTSTQADSQSSSD). Phosphoserine; by ATM is present on Ser650.

Belongs to the DNA repair metallo-beta-lactamase (DRMBL) family. As to quaternary structure, interacts with LIG4; the interaction is direct. Interacts with ATM. Interacts with BRCA1. Interacts with PRKDC. Interacts with TP53BP1. Also exhibits ATM- and phosphorylation-dependent interaction with the MRN complex, composed of MRE11, RAD50, and NBN. Post-translationally, phosphorylation on undefined residues by PRKDC may stimulate endonucleolytic activity on 5' and 3' hairpins and overhangs. PRKDC must remain present, even after phosphorylation, for efficient hairpin opening. Also phosphorylated by ATM in response to ionizing radiation (IR) and by ATR in response to ultraviolet (UV) radiation.

The protein localises to the nucleus. Required for V(D)J recombination, the process by which exons encoding the antigen-binding domains of immunoglobulins and T-cell receptor proteins are assembled from individual V, (D), and J gene segments. V(D)J recombination is initiated by the lymphoid specific RAG endonuclease complex, which generates site specific DNA double strand breaks (DSBs). These DSBs present two types of DNA end structures: hairpin sealed coding ends and phosphorylated blunt signal ends. These ends are independently repaired by the non homologous end joining (NHEJ) pathway to form coding and signal joints respectively. This protein exhibits single-strand specific 5'-3' exonuclease activity in isolation, and acquires endonucleolytic activity on 5' and 3' hairpins and overhangs when in a complex with PRKDC. The latter activity is required specifically for the resolution of closed hairpins prior to the formation of the coding joint. May also be required for the repair of complex DSBs induced by ionizing radiation, which require substantial end-processing prior to religation by NHEJ. The protein is Protein artemis (Dclre1c) of Rattus norvegicus (Rat).